The following is a 130-amino-acid chain: Histone H2A type 1-E (130 aa).

The disordered stretch occupies residues 1–22 (MSGRGKQGGKARAKAKTRSSRA). S2 is modified (N-acetylserine). S2 is modified (phosphoserine; by RPS6KA5). Residue R4 is modified to Citrulline; alternate. R4 carries the symmetric dimethylarginine; by PRMT5; alternate modification. Residues K6 and K10 each carry the N6-(2-hydroxyisobutyryl)lysine; alternate modification. K6 carries the post-translational modification N6-acetyllysine; alternate. The segment covering 7–19 (QGGKARAKAKTRS) has biased composition (basic residues). The residue at position 10 (K10) is an N6-lactoyllysine; alternate. K10 bears the N6-succinyllysine; alternate mark. Residues K14 and K16 each participate in a glycyl lysine isopeptide (Lys-Gly) (interchain with G-Cter in ubiquitin) cross-link. At K37 the chain carries N6-(2-hydroxyisobutyryl)lysine; alternate. An N6-(beta-hydroxybutyryl)lysine; alternate modification is found at K37. Position 37 is an N6-crotonyllysine; alternate (K37). 2 positions are modified to N6-(2-hydroxyisobutyryl)lysine: K75 and K76. The residue at position 96 (K96) is an N6-(2-hydroxyisobutyryl)lysine; alternate. An N6-succinyllysine; alternate modification is found at K96. Residue K96 is modified to N6-glutaryllysine; alternate. Q105 bears the N5-methylglutamine mark. An N6-(2-hydroxyisobutyryl)lysine; alternate modification is found at K119. N6-crotonyllysine; alternate is present on residues K119 and K120. An N6-glutaryllysine; alternate mark is found at K119 and K120. K120 is covalently cross-linked (Glycyl lysine isopeptide (Lys-Gly) (interchain with G-Cter in ubiquitin); alternate). Phosphothreonine; by DCAF1 is present on T121. N6-crotonyllysine; alternate is present on K126. At K126 the chain carries N6-glutaryllysine; alternate.

It belongs to the histone H2A family. As to quaternary structure, the nucleosome is a histone octamer containing two molecules each of H2A, H2B, H3 and H4 assembled in one H3-H4 heterotetramer and two H2A-H2B heterodimers. The octamer wraps approximately 147 bp of DNA. In terms of processing, deiminated on Arg-4 in granulocytes upon calcium entry. Post-translationally, monoubiquitination of Lys-120 (H2AK119Ub) by RING1, TRIM37 and RNF2/RING2 complex gives a specific tag for epigenetic transcriptional repression and participates in X chromosome inactivation of female mammals. It is involved in the initiation of both imprinted and random X inactivation. Ubiquitinated H2A is enriched in inactive X chromosome chromatin. Ubiquitination of H2A functions downstream of methylation of 'Lys-27' of histone H3 (H3K27me). H2AK119Ub by RNF2/RING2 can also be induced by ultraviolet and may be involved in DNA repair. Following DNA double-strand breaks (DSBs), it is ubiquitinated through 'Lys-63' linkage of ubiquitin moieties by the E2 ligase UBE2N and the E3 ligases RNF8 and RNF168, leading to the recruitment of repair proteins to sites of DNA damage. Ubiquitination at Lys-14 and Lys-16 (H2AK13Ub and H2AK15Ub, respectively) in response to DNA damage is initiated by RNF168 that mediates monoubiquitination at these 2 sites, and 'Lys-63'-linked ubiquitin are then conjugated to monoubiquitin; RNF8 is able to extend 'Lys-63'-linked ubiquitin chains in vitro. H2AK119Ub and ionizing radiation-induced 'Lys-63'-linked ubiquitination (H2AK13Ub and H2AK15Ub) are distinct events. Phosphorylation on Ser-2 (H2AS1ph) is enhanced during mitosis. Phosphorylation on Ser-2 by RPS6KA5/MSK1 directly represses transcription. Acetylation of H3 inhibits Ser-2 phosphorylation by RPS6KA5/MSK1. Phosphorylation at Thr-121 (H2AT120ph) by DCAF1 is present in the regulatory region of many tumor suppresor genes and down-regulates their transcription. In terms of processing, symmetric dimethylation on Arg-4 by the PRDM1/PRMT5 complex may play a crucial role in the germ-cell lineage. Post-translationally, glutamine methylation at Gln-105 (H2AQ104me) by FBL is specifically dedicated to polymerase I. It is present at 35S ribosomal DNA locus and impairs binding of the FACT complex. Crotonylation (Kcr) is specifically present in male germ cells and marks testis-specific genes in post-meiotic cells, including X-linked genes that escape sex chromosome inactivation in haploid cells. Crotonylation marks active promoters and enhancers and confers resistance to transcriptional repressors. It is also associated with post-meiotically activated genes on autosomes. In terms of processing, lactylated in macrophages by EP300/P300 by using lactoyl-CoA directly derived from endogenous or exogenous lactate, leading to stimulates gene transcription.

It localises to the nucleus. It is found in the chromosome. Its function is as follows. Core component of nucleosome. Nucleosomes wrap and compact DNA into chromatin, limiting DNA accessibility to the cellular machineries which require DNA as a template. Histones thereby play a central role in transcription regulation, DNA repair, DNA replication and chromosomal stability. DNA accessibility is regulated via a complex set of post-translational modifications of histones, also called histone code, and nucleosome remodeling. The protein is Histone H2A type 1-E of Rattus norvegicus (Rat).